The following is a 195-amino-acid chain: Holliday junction branch migration complex subunit RuvA (195 aa).

The segment at 1–66 (MNYLIFKVIY…LIIKDLYGFR (66 aa)) is domain I. Residues 67–141 (TYNERLLFID…KYINKVNDKN (75 aa)) are domain II. Position 141 (asparagine 141) is a region of interest, flexible linker. The segment at 141 to 195 (NNWAKELSIGLENLGYTKKDIEYAITKVKINSQQDIDISEIISSAIKEISLRHEN) is domain III.

It belongs to the RuvA family. As to quaternary structure, homotetramer. Forms an RuvA(8)-RuvB(12)-Holliday junction (HJ) complex. HJ DNA is sandwiched between 2 RuvA tetramers; dsDNA enters through RuvA and exits via RuvB. An RuvB hexamer assembles on each DNA strand where it exits the tetramer. Each RuvB hexamer is contacted by two RuvA subunits (via domain III) on 2 adjacent RuvB subunits; this complex drives branch migration. In the full resolvosome a probable DNA-RuvA(4)-RuvB(12)-RuvC(2) complex forms which resolves the HJ.

The protein resides in the cytoplasm. The RuvA-RuvB-RuvC complex processes Holliday junction (HJ) DNA during genetic recombination and DNA repair, while the RuvA-RuvB complex plays an important role in the rescue of blocked DNA replication forks via replication fork reversal (RFR). RuvA specifically binds to HJ cruciform DNA, conferring on it an open structure. The RuvB hexamer acts as an ATP-dependent pump, pulling dsDNA into and through the RuvAB complex. HJ branch migration allows RuvC to scan DNA until it finds its consensus sequence, where it cleaves and resolves the cruciform DNA. This is Holliday junction branch migration complex subunit RuvA from Ureaplasma parvum serovar 3 (strain ATCC 27815 / 27 / NCTC 11736).